Reading from the N-terminus, the 57-residue chain is Conotoxin reg3.17 (57 aa).

Positions 1–16 (TICLLLFPLTVVPLDG) are cleaved as a signal peptide. The propeptide occupies 17–44 (DQPAHQPAVRKHNIKSAVQLRQWDEEQQ). 3 disulfide bridges follow: Cys45–Cys57, Cys46–Cys53, and Cys50–Cys56.

It belongs to the conotoxin M superfamily. In terms of tissue distribution, expressed by the venom duct.

It localises to the secreted. The chain is Conotoxin reg3.17 from Conus regius (Crown cone).